The following is a 111-amino-acid chain: Large ribosomal subunit protein uL22 (111 aa).

It belongs to the universal ribosomal protein uL22 family. In terms of assembly, part of the 50S ribosomal subunit.

This protein binds specifically to 23S rRNA; its binding is stimulated by other ribosomal proteins, e.g. L4, L17, and L20. It is important during the early stages of 50S assembly. It makes multiple contacts with different domains of the 23S rRNA in the assembled 50S subunit and ribosome. Its function is as follows. The globular domain of the protein is located near the polypeptide exit tunnel on the outside of the subunit, while an extended beta-hairpin is found that lines the wall of the exit tunnel in the center of the 70S ribosome. This is Large ribosomal subunit protein uL22 from Acholeplasma laidlawii (strain PG-8A).